The following is a 264-amino-acid chain: Thymidylate synthase (264 aa).

Arg-21 provides a ligand contact to dUMP. Residue His-51 coordinates (6R)-5,10-methylene-5,6,7,8-tetrahydrofolate. Position 126-127 (126-127) interacts with dUMP; sequence RR. Cys-146 functions as the Nucleophile in the catalytic mechanism. DUMP contacts are provided by residues 166–169, Asn-177, and 207–209; these read RSAD and HLY. Position 169 (Asp-169) interacts with (6R)-5,10-methylene-5,6,7,8-tetrahydrofolate. A (6R)-5,10-methylene-5,6,7,8-tetrahydrofolate-binding site is contributed by Ser-263.

The protein belongs to the thymidylate synthase family. Bacterial-type ThyA subfamily. As to quaternary structure, homodimer.

Its subcellular location is the cytoplasm. The catalysed reaction is dUMP + (6R)-5,10-methylene-5,6,7,8-tetrahydrofolate = 7,8-dihydrofolate + dTMP. The protein operates within pyrimidine metabolism; dTTP biosynthesis. Catalyzes the reductive methylation of 2'-deoxyuridine-5'-monophosphate (dUMP) to 2'-deoxythymidine-5'-monophosphate (dTMP) while utilizing 5,10-methylenetetrahydrofolate (mTHF) as the methyl donor and reductant in the reaction, yielding dihydrofolate (DHF) as a by-product. This enzymatic reaction provides an intracellular de novo source of dTMP, an essential precursor for DNA biosynthesis. This is Thymidylate synthase from Nitrosococcus oceani (strain ATCC 19707 / BCRC 17464 / JCM 30415 / NCIMB 11848 / C-107).